The following is a 172-amino-acid chain: Shikimate kinase (172 aa).

11–16 (GAGKST) contributes to the ATP binding site. S15 is a binding site for Mg(2+). Substrate-binding residues include D33, R57, and G79. R117 is a binding site for ATP. Position 136 (R136) interacts with substrate. Residue R153 coordinates ATP.

It belongs to the shikimate kinase family. As to quaternary structure, monomer. Mg(2+) serves as cofactor.

Its subcellular location is the cytoplasm. It carries out the reaction shikimate + ATP = 3-phosphoshikimate + ADP + H(+). It functions in the pathway metabolic intermediate biosynthesis; chorismate biosynthesis; chorismate from D-erythrose 4-phosphate and phosphoenolpyruvate: step 5/7. In terms of biological role, catalyzes the specific phosphorylation of the 3-hydroxyl group of shikimic acid using ATP as a cosubstrate. The chain is Shikimate kinase from Pseudomonas aeruginosa (strain LESB58).